The chain runs to 428 residues: Histidinol dehydrogenase (428 aa).

Positions 124, 186, and 209 each coordinate NAD(+). Substrate contacts are provided by S233, Q255, and H258. Zn(2+)-binding residues include Q255 and H258. Residues E322 and H323 each act as proton acceptor in the active site. Residues H323, D356, E410, and H415 each contribute to the substrate site. D356 serves as a coordination point for Zn(2+). H415 serves as a coordination point for Zn(2+).

It belongs to the histidinol dehydrogenase family. Requires Zn(2+) as cofactor.

The enzyme catalyses L-histidinol + 2 NAD(+) + H2O = L-histidine + 2 NADH + 3 H(+). It participates in amino-acid biosynthesis; L-histidine biosynthesis; L-histidine from 5-phospho-alpha-D-ribose 1-diphosphate: step 9/9. Functionally, catalyzes the sequential NAD-dependent oxidations of L-histidinol to L-histidinaldehyde and then to L-histidine. The chain is Histidinol dehydrogenase from Bacteroides fragilis (strain ATCC 25285 / DSM 2151 / CCUG 4856 / JCM 11019 / LMG 10263 / NCTC 9343 / Onslow / VPI 2553 / EN-2).